We begin with the raw amino-acid sequence, 101 residues long: MNPTIAKITCPLCGNDEATVHRQKDRKKKLYYRCTGATFADGCGTIQCTGASGQAFISKNMKPLNGVESEDAAIEAAEDAKAEQVKPNKKRSFLDFLVDDE.

Its function is as follows. May regulate the expression of phage structural components with protein P13. This is an uncharacterized protein from Pseudoalteromonas phage PM2 (Bacteriophage PM2).